Reading from the N-terminus, the 375-residue chain is Actin-related protein T1 (375 aa).

Belongs to the actin family.

It is found in the cytoplasm. The protein resides in the cytoskeleton. The protein localises to the nucleus. It localises to the cytoplasmic vesicle. Its subcellular location is the secretory vesicle. It is found in the acrosome. Its function is as follows. Negatively regulates the Hedgehog (SHH) signaling. Binds to the promoter of the SHH signaling mediator, GLI1, and inhibits its expression. The sequence is that of Actin-related protein T1 (ACTRT1) from Macaca fascicularis (Crab-eating macaque).